The following is a 122-amino-acid chain: MIQQESRLKVADNTGAKEILCIRVLGGSGRRYAGIGDVIVATVKDAIPGGNVKKGDVVKAVVVRTVKERRRPDGSYIRFDENAAVILKNDGEPRGTRIFGPVGRELREKKFMKIISLAPEVL.

This sequence belongs to the universal ribosomal protein uL14 family. As to quaternary structure, part of the 50S ribosomal subunit. Forms a cluster with proteins L3 and L19. In the 70S ribosome, L14 and L19 interact and together make contacts with the 16S rRNA in bridges B5 and B8.

Functionally, binds to 23S rRNA. Forms part of two intersubunit bridges in the 70S ribosome. In Nocardioides sp. (strain ATCC BAA-499 / JS614), this protein is Large ribosomal subunit protein uL14.